The following is a 461-amino-acid chain: Cyclic AMP-responsive element-binding protein 3-like protein 3 (461 aa).

The Cytoplasmic portion of the chain corresponds to 1–322 (MNTDLAAGKM…STSKSAQTGT (322 aa)). The tract at residues 51 to 120 (DQQVLPNPDS…AGCHPAQPGK (70 aa)) is disordered. Low complexity predominate over residues 63–85 (FLSSILGSGDSLPSSPLWSPEGS). Ser-173 is subject to Phosphoserine. The region spanning 243–306 (VLKKIRRKIR…LSLLEQLKKL (64 aa)) is the bZIP domain. The tract at residues 245-274 (KKIRRKIRNKQSAQESRKKKKEYIDGLETR) is basic motif. The leucine-zipper stretch occupies residues 285–306 (LQRKVLHLEKQNLSLLEQLKKL). Lys-294 participates in a covalent cross-link: Glycyl lysine isopeptide (Lys-Gly) (interchain with G-Cter in ubiquitin). A helical; Signal-anchor for type II membrane protein transmembrane segment spans residues 323–343 (CVAVLLLSFALIILPSISPFG). Residues 344 to 461 (PNKTESPGDF…AGLEAAGDEL (118 aa)) lie on the Lumenal side of the membrane. Positions 370 to 408 (RVAADAVPGSEAPGPRPEADTTREESPGSPGADWGFQDT) are disordered. The O-linked (GalNAc...) serine glycan is linked to Ser-379. Basic and acidic residues predominate over residues 386–395 (PEADTTREES). N-linked (GlcNAc...) asparagine glycosylation is found at Asn-410, Asn-413, Asn-420, and Asn-427. The segment at 442-461 (APGPSTGSGRAGLEAAGDEL) is disordered.

The protein belongs to the bZIP family. ATF subfamily. As to quaternary structure, binds DNA as a dimer. May form homodimers. Interacts with ATF6. Interacts with SYNV1/HRD1; this interaction leads to CREB3L3 ubiquitination and proteasomal degradation. In terms of processing, controlled by regulated intramembrane proteolysis (RIP). Following ER stress a fragment containing the cytoplasmic transcription factor domain is released by proteolysis. The cleavage seems to be performed sequentially by site-1 and site-2 proteases (PS1 and PS2). Post-translationally, N- and O-glycosylated. N-glycosylation is required for optimal proteolytic activation. O-glycosylated with core 1 or possibly core 8 glycans. Ubiquitinated at Lys-294 by SYNV1/HRD1 via 'Lys-27'-linked ubiquitin. In terms of tissue distribution, exclusively expressed in liver. Underexpressed in hepatocellular carcinoma tissues.

It is found in the endoplasmic reticulum membrane. It localises to the nucleus. Transcription factor that may act during endoplasmic reticulum stress by activating unfolded protein response target genes. Activated in response to cAMP stimulation. In vitro, binds to the cAMP response element (CRE) and box-B element. Activates transcription through box-B element. Activates transcription through CRE. May function synergistically with ATF6. In acute inflammatory response, may activate expression of acute phase response (APR) genes. May be involved in growth suppression. Regulates FGF21 transcription. Plays a crucial role in the regulation of triglyceride metabolism and is required for the maintenance of normal plasma triglyceride concentrations. This is Cyclic AMP-responsive element-binding protein 3-like protein 3 (CREB3L3) from Homo sapiens (Human).